The primary structure comprises 278 residues: Probable endonuclease 4 (278 aa).

9 residues coordinate Zn(2+): His-66, His-106, Glu-142, Asp-176, His-179, His-213, Asp-226, His-228, and Glu-258.

Belongs to the AP endonuclease 2 family. Zn(2+) serves as cofactor.

The enzyme catalyses Endonucleolytic cleavage to 5'-phosphooligonucleotide end-products.. In terms of biological role, endonuclease IV plays a role in DNA repair. It cleaves phosphodiester bonds at apurinic or apyrimidinic (AP) sites, generating a 3'-hydroxyl group and a 5'-terminal sugar phosphate. This chain is Probable endonuclease 4, found in Halothermothrix orenii (strain H 168 / OCM 544 / DSM 9562).